The following is a 259-amino-acid chain: Borneol dehydrogenase, mitochondrial (259 aa).

The transit peptide at 1-30 directs the protein to the mitochondrion; the sequence is MASTVLRRLEGKVALITGAASGIGESAARL. NAD(+)-binding positions include 21 to 23, Asp42, 63 to 64, and 90 to 92; these read SGI, DV, and NAG. Ser144 functions as the Proton donor in the catalytic mechanism. Substrate contacts are provided by Ser144 and Tyr157. The NAD(+) site is built by Tyr157, Lys161, and Thr192. Tyr157 serves as the catalytic Proton acceptor. The active-site Proton donor/acceptor is Lys161.

It belongs to the short-chain dehydrogenases/reductases (SDR) family. Specifically expressed in glandular trichomes of mature flowers.

The protein resides in the mitochondrion. It carries out the reaction borneol + NAD(+) = camphor + NADH + H(+). The protein operates within secondary metabolite biosynthesis; terpenoid biosynthesis. Involved in the biosynthesis of monoterpenes natural products related to camphor. Catalyzes the conversion of borneol into camphor. The protein is Borneol dehydrogenase, mitochondrial of Lavandula x intermedia (Lavandin).